The primary structure comprises 62 residues: UPF0339 protein Atu0232 (62 aa).

The protein belongs to the UPF0339 family.

The polypeptide is UPF0339 protein Atu0232 (Agrobacterium fabrum (strain C58 / ATCC 33970) (Agrobacterium tumefaciens (strain C58))).